The sequence spans 118 residues: Acidic phospholipase A2 (118 aa).

Ca(2+) is bound by residues Y25, G27, and G29. The active site involves H45. Residue D46 coordinates Ca(2+). Residue D86 is part of the active site.

It belongs to the phospholipase A2 family. Group II subfamily. D49 sub-subfamily. It depends on Ca(2+) as a cofactor. Post-translationally, six disulfide bonds are present. Expressed by the venom gland.

It localises to the secreted. It catalyses the reaction a 1,2-diacyl-sn-glycero-3-phosphocholine + H2O = a 1-acyl-sn-glycero-3-phosphocholine + a fatty acid + H(+). Functionally, PLA2 catalyzes the calcium-dependent hydrolysis of the 2-acyl groups in 3-sn-phosphoglycerides. This Bitis gabonica (Gaboon adder) protein is Acidic phospholipase A2.